Here is a 202-residue protein sequence, read N- to C-terminus: Dephospho-CoA kinase (202 aa).

The DPCK domain occupies 6-202 (KVSITGDLSS…EYFYALKGAL (197 aa)). ATP is bound at residue 14 to 19 (SSGKTE).

This sequence belongs to the CoaE family.

The protein resides in the cytoplasm. The catalysed reaction is 3'-dephospho-CoA + ATP = ADP + CoA + H(+). The protein operates within cofactor biosynthesis; coenzyme A biosynthesis; CoA from (R)-pantothenate: step 5/5. Its function is as follows. Catalyzes the phosphorylation of the 3'-hydroxyl group of dephosphocoenzyme A to form coenzyme A. In Chlamydia caviae (strain ATCC VR-813 / DSM 19441 / 03DC25 / GPIC) (Chlamydophila caviae), this protein is Dephospho-CoA kinase.